The chain runs to 264 residues: GTP cyclohydrolase FolE2 (264 aa).

It belongs to the GTP cyclohydrolase IV family.

The catalysed reaction is GTP + H2O = 7,8-dihydroneopterin 3'-triphosphate + formate + H(+). It participates in cofactor biosynthesis; 7,8-dihydroneopterin triphosphate biosynthesis; 7,8-dihydroneopterin triphosphate from GTP: step 1/1. Converts GTP to 7,8-dihydroneopterin triphosphate. This chain is GTP cyclohydrolase FolE2, found in Akkermansia muciniphila (strain ATCC BAA-835 / DSM 22959 / JCM 33894 / BCRC 81048 / CCUG 64013 / CIP 107961 / Muc).